A 147-amino-acid polypeptide reads, in one-letter code: Large ribosomal subunit protein bL9 (147 aa).

The protein belongs to the bacterial ribosomal protein bL9 family.

Its function is as follows. Binds to the 23S rRNA. This is Large ribosomal subunit protein bL9 from Caldanaerobacter subterraneus subsp. tengcongensis (strain DSM 15242 / JCM 11007 / NBRC 100824 / MB4) (Thermoanaerobacter tengcongensis).